The chain runs to 160 residues: Phosphopantetheine adenylyltransferase (160 aa).

Position 11 (threonine 11) interacts with substrate. ATP is bound by residues 11–12 and histidine 19; that span reads TF. 3 residues coordinate substrate: lysine 43, threonine 75, and arginine 89. Residues 90–92, glutamate 100, and 125–131 contribute to the ATP site; these read GLR and YSFLSSS.

Belongs to the bacterial CoaD family. In terms of assembly, homohexamer. Requires Mg(2+) as cofactor.

Its subcellular location is the cytoplasm. The enzyme catalyses (R)-4'-phosphopantetheine + ATP + H(+) = 3'-dephospho-CoA + diphosphate. It participates in cofactor biosynthesis; coenzyme A biosynthesis; CoA from (R)-pantothenate: step 4/5. Its function is as follows. Reversibly transfers an adenylyl group from ATP to 4'-phosphopantetheine, yielding dephospho-CoA (dPCoA) and pyrophosphate. The polypeptide is Phosphopantetheine adenylyltransferase (Listeria monocytogenes serotype 4b (strain CLIP80459)).